We begin with the raw amino-acid sequence, 255 residues long: 4-hydroxy-tetrahydrodipicolinate reductase (255 aa).

Residues 9–14 (GYRGKM), 89–91 (GTT), and 115–118 (APNF) contribute to the NAD(+) site. Histidine 145 serves as the catalytic Proton donor/acceptor. Histidine 146 provides a ligand contact to (S)-2,3,4,5-tetrahydrodipicolinate. The active-site Proton donor is lysine 149. Residue 155–156 (GT) participates in (S)-2,3,4,5-tetrahydrodipicolinate binding.

Belongs to the DapB family.

It localises to the cytoplasm. It carries out the reaction (S)-2,3,4,5-tetrahydrodipicolinate + NAD(+) + H2O = (2S,4S)-4-hydroxy-2,3,4,5-tetrahydrodipicolinate + NADH + H(+). It catalyses the reaction (S)-2,3,4,5-tetrahydrodipicolinate + NADP(+) + H2O = (2S,4S)-4-hydroxy-2,3,4,5-tetrahydrodipicolinate + NADPH + H(+). It functions in the pathway amino-acid biosynthesis; L-lysine biosynthesis via DAP pathway; (S)-tetrahydrodipicolinate from L-aspartate: step 4/4. In terms of biological role, catalyzes the conversion of 4-hydroxy-tetrahydrodipicolinate (HTPA) to tetrahydrodipicolinate. The chain is 4-hydroxy-tetrahydrodipicolinate reductase from Streptococcus uberis (strain ATCC BAA-854 / 0140J).